The sequence spans 872 residues: MGTTASAAQQVPSTVPSSENVQGNGSGSSNVEDRNSLSTQSFQNVSIHNKAKSIITNKVAPVVITYNCKEEFQIHDDLLKANYSVGRISETMPEHYLVQGKYFMVHDVYSKLDVLNTTSSCGAPNFRQARGGYEVYGMGQPSLNGFKQVLQKLQSNGHKECVFFCVREEPVLFLKLEDDFVPYTPRRKENLHENLHDLEKGLRAENLELAIRKELHDFAQLSGNSYYVYNDIEHFKDEPHSIIIHCEEDIHVTEEVYNRPVFLLPAYRYHRLPLPMDGAPLETQFDAFVNILRENPSLLLLHDANHPPPALLFSCQTGVGRTNLAMILGTLVLYHRKGACEKQTISQDTNVLPKQRFQVIQNFINMVPNGEAIVDEVDKAIELCSEMHDIKAALYECKKKLEGIGEGYQIQGSSTKEYFLKGTLHSLERYFYLITFNYYLHEQYPLAFALSFSKWMCTQPWIYRLQASLNLSELTLSGELITKGTRVLVLDDRFSPDVLSTLKEMNVANFRRVPKMPVYGTAQPSLKATGSVLSYLTDAKRKYSNILWVNLREDVILEANEQIFTPREPDNLEQQIAVPAASPEQLEKLEATVANHVLTSQKWLEVYLEQEKQMKMFKTCRTMQEIFNQHRSAYPGLVYRRIPIPDFCAPREQDFDMLLQSMKSMLAEDSSAAFVFNCHGGKGRTTTAMVIAVLTLWHFNSIPEITEDEIVSVPDAKYTKGEFEVVMKIVQLLPDGHKIKKEVDMALDSISETMTPMHYHLREIIICTYRQVKTAKNSKEMRLLQLRSLQYLERYIYLILFNAYLHLEKKDTWQRPFSTWMYEVASKAGVYEVLNQLGFSEFENAEEQPLCRLRYRWQQQNTNLLPFRGEFI.

The segment at 1–37 is disordered; that stretch reads MGTTASAAQQVPSTVPSSENVQGNGSGSSNVEDRNSL. The N-myristoyl glycine moiety is linked to residue Gly-2. A coiled-coil region spans residues 186–210; that stretch reads RRKENLHENLHDLEKGLRAENLELA.

This sequence belongs to the paladin family.

The protein resides in the cytoplasm. Its subcellular location is the cytosol. This chain is Paladin (pald1), found in Xenopus tropicalis (Western clawed frog).